We begin with the raw amino-acid sequence, 220 residues long: tRNA (guanine-N(7)-)-methyltransferase (220 aa).

The S-adenosyl-L-methionine site is built by glutamate 42, glutamate 67, and aspartate 122. Residue aspartate 122 is part of the active site. Substrate contacts are provided by residues lysine 126, aspartate 158, and 198–201 (TEYE).

It belongs to the class I-like SAM-binding methyltransferase superfamily. TrmB family.

The enzyme catalyses guanosine(46) in tRNA + S-adenosyl-L-methionine = N(7)-methylguanosine(46) in tRNA + S-adenosyl-L-homocysteine. Its pathway is tRNA modification; N(7)-methylguanine-tRNA biosynthesis. Functionally, catalyzes the formation of N(7)-methylguanine at position 46 (m7G46) in tRNA. The polypeptide is tRNA (guanine-N(7)-)-methyltransferase (Mycoplasma capricolum subsp. capricolum (strain California kid / ATCC 27343 / NCTC 10154)).